Here is a 101-residue protein sequence, read N- to C-terminus: Phosphoribosyl-AMP cyclohydrolase (101 aa).

Asp71 contacts Mg(2+). Cys72 contributes to the Zn(2+) binding site. Residues Asp73 and Asp75 each contribute to the Mg(2+) site. Zn(2+) contacts are provided by Cys88 and Cys95.

This sequence belongs to the PRA-CH family. As to quaternary structure, homodimer. Requires Mg(2+) as cofactor. Zn(2+) serves as cofactor.

It localises to the cytoplasm. The enzyme catalyses 1-(5-phospho-beta-D-ribosyl)-5'-AMP + H2O = 1-(5-phospho-beta-D-ribosyl)-5-[(5-phospho-beta-D-ribosylamino)methylideneamino]imidazole-4-carboxamide. It participates in amino-acid biosynthesis; L-histidine biosynthesis; L-histidine from 5-phospho-alpha-D-ribose 1-diphosphate: step 3/9. Catalyzes the hydrolysis of the adenine ring of phosphoribosyl-AMP. The protein is Phosphoribosyl-AMP cyclohydrolase of Bacillus cereus (strain 03BB102).